The chain runs to 148 residues: Proline-rich protein 13 (148 aa).

The segment at 1 to 148 is disordered; the sequence is MWNPNAGQPG…SSSSSSSDSD (148 aa). 2 stretches are compositionally biased toward pro residues: residues 27–67 and 75–93; these read AHPP…PQPG and GPYP…PVNP. Over residues 109 to 135 the composition is skewed to basic residues; the sequence is MQKKMKKAHKKMHKHQKHHKYHKHGKH. Residues 136 to 148 are compositionally biased toward low complexity; sequence SSSSSSSSSSDSD.

The protein resides in the nucleus. Negatively regulates TSP1 expression at the level of transcription. This down-regulation was shown to reduce taxane-induced apoptosis. The sequence is that of Proline-rich protein 13 (PRR13) from Homo sapiens (Human).